A 597-amino-acid polypeptide reads, in one-letter code: Adenine deaminase 2 (597 aa).

It belongs to the metallo-dependent hydrolases superfamily. Adenine deaminase family. The cofactor is Mn(2+).

The catalysed reaction is adenine + H2O + H(+) = hypoxanthine + NH4(+). In Agrobacterium fabrum (strain C58 / ATCC 33970) (Agrobacterium tumefaciens (strain C58)), this protein is Adenine deaminase 2.